The sequence spans 378 residues: RNA polymerase sigma factor SigA (378 aa).

Residues 1–29 (MKNKTEVKNGGEKKNSKKVSKEESAKEKN) are disordered. The interval 145 to 215 (LAEANLRLVV…TRAIADQART (71 aa)) is sigma-70 factor domain-2. An Interaction with polymerase core subunit RpoC motif is present at residues 169–172 (DLIQ). The sigma-70 factor domain-3 stretch occupies residues 224-300 (ETINKLIRVS…DDEAPAPADA (77 aa)). A sigma-70 factor domain-4 region spans residues 313-366 (ILNTLTPREEKVLRLRFGLDDGRARTLEEVGKEFNVTRERIRQIEAKALRKLRH). The segment at residues 339 to 358 (LEEVGKEFNVTRERIRQIEA) is a DNA-binding region (H-T-H motif).

The protein belongs to the sigma-70 factor family. RpoD/SigA subfamily. Interacts transiently with the RNA polymerase catalytic core.

It is found in the cytoplasm. In terms of biological role, sigma factors are initiation factors that promote the attachment of RNA polymerase to specific initiation sites and are then released. This sigma factor is the primary sigma factor during exponential growth. The polypeptide is RNA polymerase sigma factor SigA (Clostridium acetobutylicum (strain ATCC 824 / DSM 792 / JCM 1419 / IAM 19013 / LMG 5710 / NBRC 13948 / NRRL B-527 / VKM B-1787 / 2291 / W)).